Reading from the N-terminus, the 481-residue chain is Glutamate--tRNA ligase (481 aa).

Positions 11–21 (PSPTGLLHIGN) match the 'HIGH' region motif. The 'KMSKS' region signature appears at 255 to 259 (KLSKR). Residue lysine 258 participates in ATP binding.

It belongs to the class-I aminoacyl-tRNA synthetase family. Glutamate--tRNA ligase type 1 subfamily. Monomer.

Its subcellular location is the cytoplasm. The catalysed reaction is tRNA(Glu) + L-glutamate + ATP = L-glutamyl-tRNA(Glu) + AMP + diphosphate. Catalyzes the attachment of glutamate to tRNA(Glu) in a two-step reaction: glutamate is first activated by ATP to form Glu-AMP and then transferred to the acceptor end of tRNA(Glu). The protein is Glutamate--tRNA ligase of Streptococcus pyogenes serotype M4 (strain MGAS10750).